The chain runs to 129 residues: Cytochrome c-type protein SHP (129 aa).

The signal sequence occupies residues 1-17 (MTRFLILSAVLAGPALA). The heme c site is built by cysteine 60, cysteine 63, and histidine 64. Residues cysteine 106 and cysteine 114 are joined by a disulfide bond.

Binds 1 heme c group covalently per subunit.

Its function is as follows. High-spin cytochrome. Transiently bind oxygen during autoxidation, which occurs with a half-life of 3 minutes with a 4-fold excess of O(2). Also binds carbon monoxide, azide and cyanide. The protein is Cytochrome c-type protein SHP (shp) of Cereibacter sphaeroides (strain ATCC 17023 / DSM 158 / JCM 6121 / CCUG 31486 / LMG 2827 / NBRC 12203 / NCIMB 8253 / ATH 2.4.1.) (Rhodobacter sphaeroides).